A 225-amino-acid polypeptide reads, in one-letter code: Orotate phosphoribosyltransferase (225 aa).

Residue Lys29 participates in 5-phospho-alpha-D-ribose 1-diphosphate binding. 37–38 (FF) is an orotate binding site. Residues 75 to 76 (YK), Arg105, Lys106, Lys109, His111, and 130 to 138 (DDVITAGTS) each bind 5-phospho-alpha-D-ribose 1-diphosphate. Orotate-binding residues include Thr134 and Arg162.

The protein belongs to the purine/pyrimidine phosphoribosyltransferase family. PyrE subfamily. As to quaternary structure, homodimer. Mg(2+) is required as a cofactor.

It catalyses the reaction orotidine 5'-phosphate + diphosphate = orotate + 5-phospho-alpha-D-ribose 1-diphosphate. It functions in the pathway pyrimidine metabolism; UMP biosynthesis via de novo pathway; UMP from orotate: step 1/2. Functionally, catalyzes the transfer of a ribosyl phosphate group from 5-phosphoribose 1-diphosphate to orotate, leading to the formation of orotidine monophosphate (OMP). The polypeptide is Orotate phosphoribosyltransferase (Bordetella petrii (strain ATCC BAA-461 / DSM 12804 / CCUG 43448)).